The sequence spans 935 residues: DNA repair protein rev1 (935 aa).

One can recognise a BRCT domain in the interval Ser-59–Thr-147. The span at Ser-162–Ser-178 shows a compositional bias: polar residues. A disordered region spans residues Ser-162–Ser-193. Over residues Asp-184–Ser-193 the composition is skewed to basic and acidic residues. Residues Phe-235 to Ser-245 are interaction with target DNA. DCTP-binding positions include Arg-240 and Asp-283–Phe-287. The UmuC domain maps to Leu-279–Gly-460. Mg(2+)-binding residues include Asp-283 and Phe-284. Residues Ile-310–Asn-312 form an interaction with target DNA region. Residues Ser-317 to Arg-323, Asn-329, and Asp-378 each bind dCTP. Positions 378 and 379 each coordinate Mg(2+). Interaction with target DNA regions lie at residues Gly-460–Gln-463 and Arg-517–Asn-525.

This sequence belongs to the DNA polymerase type-Y family. Requires Mg(2+) as cofactor.

It localises to the nucleus. The protein localises to the nucleolus. Its subcellular location is the mitochondrion. It is found in the cytoplasm. The protein resides in the cytoskeleton. It localises to the spindle. Its function is as follows. Deoxycytidyl transferase involved in DNA repair. Transfers a dCMP residue from dCTP to the 3'-end of a DNA primer in a template-dependent reaction. May assist in the first step in the bypass of abasic lesions by the insertion of a nucleotide opposite the lesion. Required for normal induction of mutations by physical and chemical agents. Involved in mitochondrial DNA mutagenesis. The protein is DNA repair protein rev1 of Schizosaccharomyces pombe (strain 972 / ATCC 24843) (Fission yeast).